Here is a 547-residue protein sequence, read N- to C-terminus: Chaperonin GroEL (547 aa).

Residues 30–33 (TLGP), Lys-51, 87–91 (DGTTT), Gly-415, 479–481 (NAA), and Asp-495 contribute to the ATP site.

It belongs to the chaperonin (HSP60) family. In terms of assembly, forms a cylinder of 14 subunits composed of two heptameric rings stacked back-to-back. Interacts with the co-chaperonin GroES.

The protein localises to the cytoplasm. It catalyses the reaction ATP + H2O + a folded polypeptide = ADP + phosphate + an unfolded polypeptide.. Functionally, together with its co-chaperonin GroES, plays an essential role in assisting protein folding. The GroEL-GroES system forms a nano-cage that allows encapsulation of the non-native substrate proteins and provides a physical environment optimized to promote and accelerate protein folding. The sequence is that of Chaperonin GroEL from Cupriavidus metallidurans (strain ATCC 43123 / DSM 2839 / NBRC 102507 / CH34) (Ralstonia metallidurans).